The following is a 317-amino-acid chain: tRNA uridine(34) hydroxylase (317 aa).

Positions 129–223 (TDPEVLLIDT…YLEEVPEQES (95 aa)) constitute a Rhodanese domain. Catalysis depends on C183, which acts as the Cysteine persulfide intermediate. The disordered stretch occupies residues 298–317 (AKARNQPHPIGRNYRLPSEA).

Belongs to the TrhO family.

The enzyme catalyses uridine(34) in tRNA + AH2 + O2 = 5-hydroxyuridine(34) in tRNA + A + H2O. In terms of biological role, catalyzes oxygen-dependent 5-hydroxyuridine (ho5U) modification at position 34 in tRNAs. The sequence is that of tRNA uridine(34) hydroxylase from Pseudomonas syringae pv. tomato (strain ATCC BAA-871 / DC3000).